A 209-amino-acid chain; its full sequence is Large ribosomal subunit protein uL4 (209 aa).

The interval 46–76 (RGTASTKTRGEVSGGGRKPWRQKGTGRARHG) is disordered. The span at 63–76 (KPWRQKGTGRARHG) shows a compositional bias: basic residues.

This sequence belongs to the universal ribosomal protein uL4 family. As to quaternary structure, part of the 50S ribosomal subunit.

In terms of biological role, one of the primary rRNA binding proteins, this protein initially binds near the 5'-end of the 23S rRNA. It is important during the early stages of 50S assembly. It makes multiple contacts with different domains of the 23S rRNA in the assembled 50S subunit and ribosome. Its function is as follows. Forms part of the polypeptide exit tunnel. This is Large ribosomal subunit protein uL4 from Halothermothrix orenii (strain H 168 / OCM 544 / DSM 9562).